The sequence spans 356 residues: GTPase Obg (356 aa).

The region spanning 2 to 160 is the Obg domain; it reads ESFVDEVAIE…KFLRLSLKLL (159 aa). In terms of domain architecture, OBG-type G spans 161-329; that stretch reads ADVGIVGLPN…LLENMDEVFF (169 aa). Residues 167–174, 192–196, 215–218, 282–285, and 310–312 each bind GTP; these read GLPNAGKS, FTTLS, DIPG, NKID, and SAD. Ser-174 and Thr-194 together coordinate Mg(2+).

Belongs to the TRAFAC class OBG-HflX-like GTPase superfamily. OBG GTPase family. As to quaternary structure, monomer. Mg(2+) serves as cofactor.

It localises to the cytoplasm. Functionally, an essential GTPase which binds GTP, GDP and possibly (p)ppGpp with moderate affinity, with high nucleotide exchange rates and a fairly low GTP hydrolysis rate. Plays a role in control of the cell cycle, stress response, ribosome biogenesis and in those bacteria that undergo differentiation, in morphogenesis control. The chain is GTPase Obg from Leptospira interrogans serogroup Icterohaemorrhagiae serovar copenhageni (strain Fiocruz L1-130).